We begin with the raw amino-acid sequence, 2258 residues long: Genome polyprotein 1 (2258 aa).

A Helicase ATP-binding domain is found at 439–597; it reads SMAQEAKQWS…AVRRYEIKTV (159 aa). Position 487–494 (487–494) interacts with ATP; sequence RAATVNVT. One can recognise a Helicase C-terminal domain in the interval 612 to 778; sequence DKENSLYVLQ…GVQFYINEHF (167 aa). An O-(5'-phospho-RNA)-tyrosine modification is found at Tyr1141. Residues 1257-1476 enclose the Peptidase C4 domain; sequence ATLEGMTMKP…TKPRNMQSAP (220 aa). Catalysis depends on for nuclear inclusion protein A activity residues His1302, Asp1338, and Cys1405. A RdRp catalytic domain is found at 1745–1869; the sequence is WTHGSGDGSR…AMSPSFMVKF (125 aa). Disordered stretches follow at residues 2027–2047 and 2233–2258; these read NMAA…RGTS and TSEQ…ALLR. Over residues 2242 to 2258 the composition is skewed to basic and acidic residues; the sequence is TETRRRNDYDGHEALLR.

Belongs to the bymoviruses polyprotein 1 family. In terms of processing, VPg is uridylylated by the polymerase and is covalently attached to the 5'-end of the genomic RNA. This uridylylated form acts as a nucleotide-peptide primer for the polymerase. Post-translationally, the viral RNA1 of bymoviruses is expressed as a single polyprotein which undergoes post-translational proteolytic processing by the main proteinase NIa-pro resulting in the production of at least eight individual proteins.

It is found in the host cytoplasmic vesicle. The protein localises to the virion. The enzyme catalyses RNA(n) + a ribonucleoside 5'-triphosphate = RNA(n+1) + diphosphate. The catalysed reaction is Hydrolyzes glutaminyl bonds, and activity is further restricted by preferences for the amino acids in P6 - P1' that vary with the species of potyvirus, e.g. Glu-Xaa-Xaa-Tyr-Xaa-Gln-|-(Ser or Gly) for the enzyme from tobacco etch virus. The natural substrate is the viral polyprotein, but other proteins and oligopeptides containing the appropriate consensus sequence are also cleaved.. In terms of biological role, indispensable for virus replication. Functionally, mediates the cap-independent, EIF4E-dependent translation of viral genomic RNAs. Binds to the cap-binding site of host EIF4E and thus interferes with the host EIF4E-dependent mRNA export and translation. VPg-RNA directly binds EIF4E and is a template for transcription. Also forms trimeric complexes with EIF4E-EIF4G, which are templates for translation. Has RNA-binding and proteolytic activities. Its function is as follows. An RNA-dependent RNA polymerase that plays an essential role in the virus replication. In Barley mild mosaic virus (strain Na1) (BaMMV), this protein is Genome polyprotein 1.